The following is a 118-amino-acid chain: Small ribosomal subunit protein uS13 (118 aa).

The tract at residues 92 to 118 (RKGLPVRGQRTKTNARTRKGPRKPIRK) is disordered.

The protein belongs to the universal ribosomal protein uS13 family. As to quaternary structure, part of the 30S ribosomal subunit. Forms a loose heterodimer with protein S19. Forms two bridges to the 50S subunit in the 70S ribosome.

Located at the top of the head of the 30S subunit, it contacts several helices of the 16S rRNA. In the 70S ribosome it contacts the 23S rRNA (bridge B1a) and protein L5 of the 50S subunit (bridge B1b), connecting the 2 subunits; these bridges are implicated in subunit movement. Contacts the tRNAs in the A and P-sites. The protein is Small ribosomal subunit protein uS13 of Pseudomonas putida (strain W619).